The following is a 194-amino-acid chain: Glycerol-3-phosphate acyltransferase 2 (194 aa).

5 helical membrane passes run 1–21 (MWLL…AYVV), 64–84 (VLAV…LAAL), 112–132 (LAMA…VVIF), 135–155 (YISL…IYFH), and 156–173 (RPWP…LVIY).

It belongs to the PlsY family. As to quaternary structure, probably interacts with PlsX.

The protein localises to the cell membrane. It catalyses the reaction an acyl phosphate + sn-glycerol 3-phosphate = a 1-acyl-sn-glycero-3-phosphate + phosphate. It functions in the pathway lipid metabolism; phospholipid metabolism. Catalyzes the transfer of an acyl group from acyl-phosphate (acyl-PO(4)) to glycerol-3-phosphate (G3P) to form lysophosphatidic acid (LPA). This enzyme utilizes acyl-phosphate as fatty acyl donor, but not acyl-CoA or acyl-ACP. The protein is Glycerol-3-phosphate acyltransferase 2 of Moorella thermoacetica (strain ATCC 39073 / JCM 9320).